The primary structure comprises 364 residues: D-alanine--D-alanine ligase A (364 aa).

Residues 145–348 (KRLLRDAGLN…YTDLITRLIE (204 aa)) enclose the ATP-grasp domain. 175-230 (ESKLGLPLFVKPANQGSSVGVSKVTSEEQYAIAVDLAFEFDHKVIVEQGIKGREIE) contacts ATP. Residues aspartate 302, glutamate 315, and asparagine 317 each coordinate Mg(2+).

The protein belongs to the D-alanine--D-alanine ligase family. Mg(2+) serves as cofactor. The cofactor is Mn(2+).

It is found in the cytoplasm. It catalyses the reaction 2 D-alanine + ATP = D-alanyl-D-alanine + ADP + phosphate + H(+). The protein operates within cell wall biogenesis; peptidoglycan biosynthesis. Its function is as follows. Cell wall formation. This chain is D-alanine--D-alanine ligase A (ddlA), found in Escherichia coli O157:H7.